The following is a 218-amino-acid chain: Elongation factor Ts (218 aa).

Residues 82–85 (TDFV) form an involved in Mg(2+) ion dislocation from EF-Tu region.

This sequence belongs to the EF-Ts family.

The protein resides in the cytoplasm. In terms of biological role, associates with the EF-Tu.GDP complex and induces the exchange of GDP to GTP. It remains bound to the aminoacyl-tRNA.EF-Tu.GTP complex up to the GTP hydrolysis stage on the ribosome. The sequence is that of Elongation factor Ts from Prochlorococcus marinus (strain MIT 9211).